The following is an 88-amino-acid chain: MRVKLEHSERGMVTYSQVKKIRENDMYMKIYQEGGYHRINLVNIRKRFIVSGDKEKVSLCLGGCKPIFKGEYDSCPECGAEVRIKEVK.

This is an uncharacterized protein from Haloarcula hispanica (His1V).